The chain runs to 184 residues: NADH-quinone oxidoreductase subunit B (184 aa).

Positions 37, 38, 103, and 132 each coordinate [4Fe-4S] cluster.

The protein belongs to the complex I 20 kDa subunit family. In terms of assembly, NDH-1 is composed of 14 different subunits. Subunits NuoB, C, D, E, F, and G constitute the peripheral sector of the complex. It depends on [4Fe-4S] cluster as a cofactor.

Its subcellular location is the cell membrane. It catalyses the reaction a quinone + NADH + 5 H(+)(in) = a quinol + NAD(+) + 4 H(+)(out). In terms of biological role, NDH-1 shuttles electrons from NADH, via FMN and iron-sulfur (Fe-S) centers, to quinones in the respiratory chain. The immediate electron acceptor for the enzyme in this species is believed to be a menaquinone. Couples the redox reaction to proton translocation (for every two electrons transferred, four hydrogen ions are translocated across the cytoplasmic membrane), and thus conserves the redox energy in a proton gradient. This chain is NADH-quinone oxidoreductase subunit B, found in Rhodococcus jostii (strain RHA1).